A 279-amino-acid polypeptide reads, in one-letter code: Pantothenate synthetase (279 aa).

Position 26-33 (26-33 (MGNLHEGH)) interacts with ATP. The active-site Proton donor is histidine 33. Glutamine 57 contacts (R)-pantoate. Glutamine 57 serves as a coordination point for beta-alanine. 144-147 (GKKD) provides a ligand contact to ATP. Glutamine 150 is a (R)-pantoate binding site. Residues valine 173 and 181 to 184 (LSSR) each bind ATP.

The protein belongs to the pantothenate synthetase family. As to quaternary structure, homodimer.

The protein localises to the cytoplasm. It catalyses the reaction (R)-pantoate + beta-alanine + ATP = (R)-pantothenate + AMP + diphosphate + H(+). It functions in the pathway cofactor biosynthesis; (R)-pantothenate biosynthesis; (R)-pantothenate from (R)-pantoate and beta-alanine: step 1/1. Its function is as follows. Catalyzes the condensation of pantoate with beta-alanine in an ATP-dependent reaction via a pantoyl-adenylate intermediate. This Burkholderia lata (strain ATCC 17760 / DSM 23089 / LMG 22485 / NCIMB 9086 / R18194 / 383) protein is Pantothenate synthetase.